Consider the following 122-residue polypeptide: Small ribosomal subunit protein uS13 (122 aa).

Residues 96–122 (LPVRGQRTKTNSRTRKGKRKTIAGKKK) are disordered. The segment covering 101–122 (QRTKTNSRTRKGKRKTIAGKKK) has biased composition (basic residues).

This sequence belongs to the universal ribosomal protein uS13 family. Part of the 30S ribosomal subunit. Forms a loose heterodimer with protein S19. Forms two bridges to the 50S subunit in the 70S ribosome.

Its function is as follows. Located at the top of the head of the 30S subunit, it contacts several helices of the 16S rRNA. In the 70S ribosome it contacts the 23S rRNA (bridge B1a) and protein L5 of the 50S subunit (bridge B1b), connecting the 2 subunits; these bridges are implicated in subunit movement. Contacts the tRNAs in the A and P-sites. The sequence is that of Small ribosomal subunit protein uS13 from Chlamydia trachomatis serovar L2 (strain ATCC VR-902B / DSM 19102 / 434/Bu).